The primary structure comprises 1020 residues: DNA-directed RNA polymerase 2, chloroplastic/mitochondrial (1020 aa).

The tract at residues 314–336 (KKQKAEKDKQKEDGEHVTQEQEK) is disordered. Active-site residues include aspartate 721, lysine 796, and aspartate 953.

This sequence belongs to the phage and mitochondrial RNA polymerase family. The highest levels of expression are detected in the mature leaves. The level of expression is lowest in the cotyledons.

It is found in the plastid. Its subcellular location is the chloroplast. The protein localises to the mitochondrion. The enzyme catalyses RNA(n) + a ribonucleoside 5'-triphosphate = RNA(n+1) + diphosphate. In terms of biological role, DNA-dependent RNA polymerase catalyzes the transcription of DNA into RNA using the four ribonucleoside triphosphates as substrates. The polypeptide is DNA-directed RNA polymerase 2, chloroplastic/mitochondrial (RPOT2) (Nicotiana sylvestris (Wood tobacco)).